Reading from the N-terminus, the 657-residue chain is uncharacterized protein (657 aa).

Residues Ser-518 and His-631 each act as charge relay system in the active site.

Belongs to the peptidase S9C family.

This is an uncharacterized protein from Bacillus subtilis (strain 168).